The primary structure comprises 349 residues: Cytoplasmic tRNA 2-thiolation protein 2 (349 aa).

Belongs to the CTU2/NCS2 family.

The protein resides in the cytoplasm. It participates in tRNA modification; 5-methoxycarbonylmethyl-2-thiouridine-tRNA biosynthesis. Its function is as follows. Plays a central role in 2-thiolation of mcm(5)S(2)U at tRNA wobble positions of tRNA(Lys), tRNA(Glu) and tRNA(Gln). May act by forming a heterodimer with tut-1/ctu-1 that ligates sulfur from thiocarboxylated urm-1 onto the uridine of tRNAs at wobble position. This chain is Cytoplasmic tRNA 2-thiolation protein 2, found in Caenorhabditis elegans.